Consider the following 479-residue polypeptide: UDP-N-acetylmuramoyl-L-alanyl-D-glutamate--2,6-diaminopimelate ligase (479 aa).

Ser-21 provides a ligand contact to UDP-N-acetyl-alpha-D-muramoyl-L-alanyl-D-glutamate. 98-104 (GTNGKSS) lines the ATP pocket. UDP-N-acetyl-alpha-D-muramoyl-L-alanyl-D-glutamate-binding positions include 144 to 145 (TT), Ser-171, Gln-177, and Arg-179. The residue at position 211 (Lys-211) is an N6-carboxylysine. Residues Arg-372, 396-399 (DNPR), Gly-446, and Glu-450 contribute to the meso-2,6-diaminopimelate site. The Meso-diaminopimelate recognition motif signature appears at 396 to 399 (DNPR).

The protein belongs to the MurCDEF family. MurE subfamily. Requires Mg(2+) as cofactor. Post-translationally, carboxylation is probably crucial for Mg(2+) binding and, consequently, for the gamma-phosphate positioning of ATP.

The protein resides in the cytoplasm. It catalyses the reaction UDP-N-acetyl-alpha-D-muramoyl-L-alanyl-D-glutamate + meso-2,6-diaminopimelate + ATP = UDP-N-acetyl-alpha-D-muramoyl-L-alanyl-gamma-D-glutamyl-meso-2,6-diaminopimelate + ADP + phosphate + H(+). It participates in cell wall biogenesis; peptidoglycan biosynthesis. In terms of biological role, catalyzes the addition of meso-diaminopimelic acid to the nucleotide precursor UDP-N-acetylmuramoyl-L-alanyl-D-glutamate (UMAG) in the biosynthesis of bacterial cell-wall peptidoglycan. The chain is UDP-N-acetylmuramoyl-L-alanyl-D-glutamate--2,6-diaminopimelate ligase from Rickettsia montanensis.